Reading from the N-terminus, the 149-residue chain is Calmodulin (149 aa).

The residue at position 2 (Ala2) is an N-acetylalanine. EF-hand domains lie at 8 to 43, 44 to 79, 81 to 116, and 117 to 149; these read EQIA…LGQN, PTEA…KMKD, DSEE…LGEK, and LTDE…MTAK. 15 residues coordinate Ca(2+): Asp21, Asp23, Asp25, Thr27, Glu32, Asp57, Asp59, Asn61, Thr63, Glu68, Asp94, Asp96, Asn98, Tyr100, and Glu105. At Lys116 the chain carries N6,N6,N6-trimethyllysine. Ca(2+) contacts are provided by Asp130, Asp132, Asp134, Gln136, and Glu141.

The protein belongs to the calmodulin family.

In terms of biological role, calmodulin acts as part of a calcium signal transduction pathway by mediating the control of a large number of enzymes, ion channels, aquaporins and other proteins through calcium-binding. Calcium-binding is required for the activation of calmodulin. Among the enzymes to be stimulated by the calmodulin-calcium complex are a number of protein kinases, such as myosin light-chain kinases and calmodulin-dependent protein kinase type II (CaMK2), and phosphatases. This Electrophorus electricus (Electric eel) protein is Calmodulin (calm).